The primary structure comprises 354 residues: Chorismate synthase (354 aa).

NADP(+) is bound at residue R48. FMN is bound by residues 126–128 (RAS), A278, 293–297 (KPIPS), and R319.

It belongs to the chorismate synthase family. Homotetramer. FMNH2 serves as cofactor.

The catalysed reaction is 5-O-(1-carboxyvinyl)-3-phosphoshikimate = chorismate + phosphate. The protein operates within metabolic intermediate biosynthesis; chorismate biosynthesis; chorismate from D-erythrose 4-phosphate and phosphoenolpyruvate: step 7/7. Its function is as follows. Catalyzes the anti-1,4-elimination of the C-3 phosphate and the C-6 proR hydrogen from 5-enolpyruvylshikimate-3-phosphate (EPSP) to yield chorismate, which is the branch point compound that serves as the starting substrate for the three terminal pathways of aromatic amino acid biosynthesis. This reaction introduces a second double bond into the aromatic ring system. The polypeptide is Chorismate synthase (Desulfosudis oleivorans (strain DSM 6200 / JCM 39069 / Hxd3) (Desulfococcus oleovorans)).